Reading from the N-terminus, the 245-residue chain is tRNA pseudouridine synthase A (245 aa).

D52 serves as the catalytic Nucleophile. Y111 contacts substrate.

The protein belongs to the tRNA pseudouridine synthase TruA family. Homodimer.

It catalyses the reaction uridine(38/39/40) in tRNA = pseudouridine(38/39/40) in tRNA. Formation of pseudouridine at positions 38, 39 and 40 in the anticodon stem and loop of transfer RNAs. The polypeptide is tRNA pseudouridine synthase A (Afipia carboxidovorans (strain ATCC 49405 / DSM 1227 / KCTC 32145 / OM5) (Oligotropha carboxidovorans)).